A 417-amino-acid polypeptide reads, in one-letter code: Serine hydroxymethyltransferase 2 (417 aa).

(6S)-5,6,7,8-tetrahydrofolate-binding positions include L121 and G125 to L127. Position 230 is an N6-(pyridoxal phosphate)lysine (K230). S355–F357 contacts (6S)-5,6,7,8-tetrahydrofolate.

This sequence belongs to the SHMT family. In terms of assembly, homodimer. The cofactor is pyridoxal 5'-phosphate.

The protein localises to the cytoplasm. The catalysed reaction is (6R)-5,10-methylene-5,6,7,8-tetrahydrofolate + glycine + H2O = (6S)-5,6,7,8-tetrahydrofolate + L-serine. The protein operates within one-carbon metabolism; tetrahydrofolate interconversion. It participates in amino-acid biosynthesis; glycine biosynthesis; glycine from L-serine: step 1/1. Functionally, catalyzes the reversible interconversion of serine and glycine with tetrahydrofolate (THF) serving as the one-carbon carrier. This reaction serves as the major source of one-carbon groups required for the biosynthesis of purines, thymidylate, methionine, and other important biomolecules. Also exhibits THF-independent aldolase activity toward beta-hydroxyamino acids, producing glycine and aldehydes, via a retro-aldol mechanism. This is Serine hydroxymethyltransferase 2 from Pseudomonas fluorescens (strain ATCC BAA-477 / NRRL B-23932 / Pf-5).